The primary structure comprises 163 residues: Crossover junction endodeoxyribonuclease RuvC (163 aa).

Active-site residues include D7, E67, and D140. Residues D7, E67, and D140 each contribute to the Mg(2+) site.

The protein belongs to the RuvC family. As to quaternary structure, homodimer which binds Holliday junction (HJ) DNA. The HJ becomes 2-fold symmetrical on binding to RuvC with unstacked arms; it has a different conformation from HJ DNA in complex with RuvA. In the full resolvosome a probable DNA-RuvA(4)-RuvB(12)-RuvC(2) complex forms which resolves the HJ. The cofactor is Mg(2+).

It is found in the cytoplasm. It catalyses the reaction Endonucleolytic cleavage at a junction such as a reciprocal single-stranded crossover between two homologous DNA duplexes (Holliday junction).. Functionally, the RuvA-RuvB-RuvC complex processes Holliday junction (HJ) DNA during genetic recombination and DNA repair. Endonuclease that resolves HJ intermediates. Cleaves cruciform DNA by making single-stranded nicks across the HJ at symmetrical positions within the homologous arms, yielding a 5'-phosphate and a 3'-hydroxyl group; requires a central core of homology in the junction. The consensus cleavage sequence is 5'-(A/T)TT(C/G)-3'. Cleavage occurs on the 3'-side of the TT dinucleotide at the point of strand exchange. HJ branch migration catalyzed by RuvA-RuvB allows RuvC to scan DNA until it finds its consensus sequence, where it cleaves and resolves the cruciform DNA. The protein is Crossover junction endodeoxyribonuclease RuvC of Petrotoga mobilis (strain DSM 10674 / SJ95).